We begin with the raw amino-acid sequence, 178 residues long: MDWPHSLLFLLAISIFLGPSQPRNTKGKRKGQVRPGPLAPGPHQVPLDLVSRVKPYARMEEYERNLGEMVAQLRNSSEPAKRRCEVNLQLWLSNKRSLSPWGYSINHDPSRIPADLPEARCLCLGCVNPFTMQEDRSMVSVPVFSQVPVRRRLCPPPPRPGPCRHRVVMETIAVGCTC.

A signal peptide spans 1–22 (MDWPHSLLFLLAISIFLGPSQP). The interval 21–44 (QPRNTKGKRKGQVRPGPLAPGPHQ) is disordered. A glycan (N-linked (GlcNAc...) asparagine) is linked at Asn-75. 2 disulfide bridges follow: Cys-121–Cys-176 and Cys-126–Cys-178.

This sequence belongs to the IL-17 family.

Its subcellular location is the secreted. Functionally, stimulates the release of tumor necrosis factor alpha and IL-1-beta from the monocytic cell line THP-1. In Mesocricetus auratus (Golden hamster), this protein is Interleukin-17B (IL17B).